The following is a 188-amino-acid chain: Pyridoxal 5'-phosphate synthase subunit PdxT (188 aa).

An L-glutamine-binding site is contributed by Gly-46–Ser-48. Residue Cys-78 is the Nucleophile of the active site. Residues Arg-105 and Ile-134–Arg-135 contribute to the L-glutamine site. Active-site charge relay system residues include His-170 and Glu-172.

Belongs to the glutaminase PdxT/SNO family. In the presence of PdxS, forms a dodecamer of heterodimers. Only shows activity in the heterodimer.

The enzyme catalyses aldehydo-D-ribose 5-phosphate + D-glyceraldehyde 3-phosphate + L-glutamine = pyridoxal 5'-phosphate + L-glutamate + phosphate + 3 H2O + H(+). The catalysed reaction is L-glutamine + H2O = L-glutamate + NH4(+). Its pathway is cofactor biosynthesis; pyridoxal 5'-phosphate biosynthesis. Catalyzes the hydrolysis of glutamine to glutamate and ammonia as part of the biosynthesis of pyridoxal 5'-phosphate. The resulting ammonia molecule is channeled to the active site of PdxS. This is Pyridoxal 5'-phosphate synthase subunit PdxT from Thermotoga maritima (strain ATCC 43589 / DSM 3109 / JCM 10099 / NBRC 100826 / MSB8).